The chain runs to 347 residues: Heme A synthase (347 aa).

The next 8 membrane-spanning stretches (helical) occupy residues 14–34 (VKIW…IGGI), 96–116 (FHRL…LYFM), 129–149 (FILI…MVKS), 162–182 (LAMH…HFLL), 199–219 (VFYI…LVAG), 260–280 (FIHE…LLVL), 287–307 (MYLL…TFIY), and 311–331 (IILA…SIYL). Heme is bound at residue H262. Heme is bound at residue H317.

Belongs to the COX15/CtaA family. Type 2 subfamily. Interacts with CtaB. Heme b is required as a cofactor.

The protein localises to the cell membrane. It carries out the reaction Fe(II)-heme o + 2 A + H2O = Fe(II)-heme a + 2 AH2. It functions in the pathway porphyrin-containing compound metabolism; heme A biosynthesis; heme A from heme O: step 1/1. Catalyzes the conversion of heme O to heme A by two successive hydroxylations of the methyl group at C8. The first hydroxylation forms heme I, the second hydroxylation results in an unstable dihydroxymethyl group, which spontaneously dehydrates, resulting in the formyl group of heme A. In Ehrlichia ruminantium (strain Welgevonden), this protein is Heme A synthase.